A 339-amino-acid polypeptide reads, in one-letter code: tRNA N6-adenosine threonylcarbamoyltransferase (339 aa).

Fe cation is bound by residues His114 and His118. Substrate-binding positions include 137–141 (VVSGG), Asp170, Gly183, Asp187, and Asn277. Fe cation is bound at residue Asp305.

The protein belongs to the KAE1 / TsaD family. Fe(2+) serves as cofactor.

It localises to the cytoplasm. The catalysed reaction is L-threonylcarbamoyladenylate + adenosine(37) in tRNA = N(6)-L-threonylcarbamoyladenosine(37) in tRNA + AMP + H(+). In terms of biological role, required for the formation of a threonylcarbamoyl group on adenosine at position 37 (t(6)A37) in tRNAs that read codons beginning with adenine. Is involved in the transfer of the threonylcarbamoyl moiety of threonylcarbamoyl-AMP (TC-AMP) to the N6 group of A37, together with TsaE and TsaB. TsaD likely plays a direct catalytic role in this reaction. This is tRNA N6-adenosine threonylcarbamoyltransferase from Clostridium beijerinckii (strain ATCC 51743 / NCIMB 8052) (Clostridium acetobutylicum).